The following is a 188-amino-acid chain: Elongation factor P (188 aa).

Belongs to the elongation factor P family.

It is found in the cytoplasm. It participates in protein biosynthesis; polypeptide chain elongation. Its function is as follows. Involved in peptide bond synthesis. Stimulates efficient translation and peptide-bond synthesis on native or reconstituted 70S ribosomes in vitro. Probably functions indirectly by altering the affinity of the ribosome for aminoacyl-tRNA, thus increasing their reactivity as acceptors for peptidyl transferase. This is Elongation factor P from Chlorobium chlorochromatii (strain CaD3).